Reading from the N-terminus, the 329-residue chain is Beta-ketoacyl-[acyl-carrier-protein] synthase III (329 aa).

Residues Cys123 and His256 contribute to the active site. Positions 257 to 261 (QANIR) are ACP-binding. The active site involves Asn286.

Belongs to the thiolase-like superfamily. FabH family. Homodimer.

The protein localises to the cytoplasm. The enzyme catalyses malonyl-[ACP] + acetyl-CoA + H(+) = 3-oxobutanoyl-[ACP] + CO2 + CoA. The protein operates within lipid metabolism; fatty acid biosynthesis. In terms of biological role, catalyzes the condensation reaction of fatty acid synthesis by the addition to an acyl acceptor of two carbons from malonyl-ACP. Catalyzes the first condensation reaction which initiates fatty acid synthesis and may therefore play a role in governing the total rate of fatty acid production. Possesses both acetoacetyl-ACP synthase and acetyl transacylase activities. Its substrate specificity determines the biosynthesis of branched-chain and/or straight-chain of fatty acids. This is Beta-ketoacyl-[acyl-carrier-protein] synthase III from Burkholderia vietnamiensis (strain G4 / LMG 22486) (Burkholderia cepacia (strain R1808)).